A 712-amino-acid chain; its full sequence is Protein phosphatase 1 regulatory subunit 37 (712 aa).

Over residues 1–12 the composition is skewed to pro residues; that stretch reads MEIPPQEAPPGP. The disordered stretch occupies residues 1-47; that stretch reads MEIPPQEAPPGPGADADADAEAETEEASAEAESPTGTSPPADGRLKA. The span at 16 to 29 shows a compositional bias: acidic residues; it reads ADADAEAETEEASA. 2 positions are modified to phosphoserine: Ser-56 and Ser-62. LRR repeat units follow at residues 226-246, 254-275, 283-303, 312-332, and 340-360; these read SLAVLHLENASLSGRPLMLLA, NLRELYLADNKLNGLQDSAQLG, SLQILDLRNNHVLDSGLAYIC, GLVTLVLWNNQLTHTGMAFLG, and SLETLNLGHNPIGNEGVRNLK. The segment at 492-680 is disordered; the sequence is ESGELPAVGS…PPGLEAKGGS (189 aa). A compositionally biased stretch (acidic residues) spans 514–531; sequence SDSDSDSDREEQEEEEED. Phosphoserine is present on Ser-583. Residues 605–626 show a composition bias toward pro residues; it reads PPVPPTFVSSPPPSPPSPPASP. Positions 639–651 are enriched in polar residues; it reads SEAQPQLEPSQAG.

Belongs to the PPP1R37 family. In terms of assembly, interacts with PPP1CA.

In terms of biological role, inhibits phosphatase activity of protein phosphatase 1 (PP1) complexes. This chain is Protein phosphatase 1 regulatory subunit 37 (Ppp1r37), found in Mus musculus (Mouse).